The primary structure comprises 384 residues: Lipid-A-disaccharide synthase (384 aa).

The protein belongs to the LpxB family.

It catalyses the reaction a lipid X + a UDP-2-N,3-O-bis[(3R)-3-hydroxyacyl]-alpha-D-glucosamine = a lipid A disaccharide + UDP + H(+). It functions in the pathway bacterial outer membrane biogenesis; LPS lipid A biosynthesis. Functionally, condensation of UDP-2,3-diacylglucosamine and 2,3-diacylglucosamine-1-phosphate to form lipid A disaccharide, a precursor of lipid A, a phosphorylated glycolipid that anchors the lipopolysaccharide to the outer membrane of the cell. The protein is Lipid-A-disaccharide synthase (lpxB) of Neisseria meningitidis serogroup B (strain ATCC BAA-335 / MC58).